A 324-amino-acid polypeptide reads, in one-letter code: Integrin-binding sialoprotein (324 aa).

Residues M1–A16 form the signal peptide. 5 positions are modified to phosphoserine: S31, S67, S75, S76, and S95. Disordered regions lie at residues V60 to L228 and Q243 to S263. Acidic residues predominate over residues S66–A105. The span at E106–T130 shows a compositional bias: polar residues. N107 carries N-linked (GlcNAc...) asparagine glycosylation. Over residues K141 to E154 the composition is skewed to basic and acidic residues. A Phosphoserine modification is found at S155. Over residues S155–E179 the composition is skewed to acidic residues. N-linked (GlcNAc...) asparagine glycosylation is found at N183, N188, and N196. Residues N203 to S213 show a composition bias toward acidic residues. Residues G253 to S263 are compositionally biased toward polar residues. The Integrin-binding motif motif lies at R293–D295. Residues Y320 and Y321 each carry the sulfotyrosine modification.

Monomer. Interacts with integrins; the interaction promotes cell adhesion.

The protein resides in the secreted. In terms of biological role, binds tightly to hydroxyapatite. Appears to form an integral part of the mineralized matrix. Probably important to cell-matrix interaction. Promotes adhesion and migration of various cells via the alpha-V/beta-3 integrin receptor (ITGAV:ITGB3). The sequence is that of Integrin-binding sialoprotein (Ibsp) from Mus musculus (Mouse).